Reading from the N-terminus, the 172-residue chain is Adenine phosphoribosyltransferase (172 aa).

It belongs to the purine/pyrimidine phosphoribosyltransferase family. Homodimer.

The protein resides in the cytoplasm. The catalysed reaction is AMP + diphosphate = 5-phospho-alpha-D-ribose 1-diphosphate + adenine. It functions in the pathway purine metabolism; AMP biosynthesis via salvage pathway; AMP from adenine: step 1/1. In terms of biological role, catalyzes a salvage reaction resulting in the formation of AMP, that is energically less costly than de novo synthesis. The chain is Adenine phosphoribosyltransferase from Clostridium botulinum (strain ATCC 19397 / Type A).